The sequence spans 122 residues: MNNLLSAYVTMLLILLSISGGAIASENCNDTSGVHQKILVCIQNEIAKSETQIRNNISSKSIDYGFPDDFYSKQRLAIHEKCMLYINVGGQRGELLMNQCELSMLQGLDIYIQQYIEDVDNS.

A signal peptide spans 1–24 (MNNLLSAYVTMLLILLSISGGAIA). 2 cysteine pairs are disulfide-bonded: cysteine 28–cysteine 41 and cysteine 82–cysteine 100.

In terms of assembly, homodimer; dimerization is critical for inhibitory activity. Forms a heterotetramer with VgrG3 composed of one TsiV3 homodimer and two VgrG3 molecules.

Its function is as follows. Immunity protein that plays a role in preventing early activation of toxin VgrG3. In Vibrio cholerae serotype O1 (strain ATCC 39315 / El Tor Inaba N16961), this protein is Antitoxin protein TsiV3.